The sequence spans 132 residues: MIVRTTTEITDTDRDITSEDGNWRSKRIVLGGDRVGFSFHETTIKAGSVNEFHYANHVEAVWLVEGTGKLIDLDNNKEYDLAPGSMYLLNGHERHRVEPDTQMRMLCVFNPPVTGREVHDENGVYPLVEVPA.

It belongs to the ectoine synthase family.

The catalysed reaction is (2S)-4-acetamido-2-aminobutanoate = L-ectoine + H2O. Its pathway is amine and polyamine biosynthesis; ectoine biosynthesis; L-ectoine from L-aspartate 4-semialdehyde: step 3/3. Functionally, catalyzes the circularization of gamma-N-acetyl-alpha,gamma-diaminobutyric acid (ADABA) to ectoine (1,4,5,6-tetrahydro-2-methyl-4-pyrimidine carboxylic acid), which is an excellent osmoprotectant. The sequence is that of L-ectoine synthase from Rhodococcus erythropolis (strain PR4 / NBRC 100887).